We begin with the raw amino-acid sequence, 518 residues long: Vesicular inhibitory amino acid transporter (518 aa).

At 1-125 the chain is on the cytoplasmic side; the sequence is MATLIRSKLS…WNVTNAIQGM (125 aa). A disordered region spans residues 66-98; the sequence is EVPSGDPTAEGDSHYQRDGTGPPSSASKDEGLC. The chain crosses the membrane as a helical span at residues 126 to 146; it reads FVLGLPYAILHGGYLGLFLII. Residues 147 to 197 are Lumenal, vesicle-facing; that stretch reads FAAVVCCYTGKILIACLYEENEDGETVRVRDSYVDIANACCAPRFPKLGGR. A helical transmembrane segment spans residues 198 to 218; the sequence is VVNVAQIIELVMTCILYVVVS. Over 219-258 the chain is Cytoplasmic; the sequence is GNLMYNSFPSLPISQKSWSIIATAMLLPCAFLKNLKAVSK. The helical transmembrane segment at 259–279 threads the bilayer; that stretch reads FSLLCTLAHFVINVLVIAYCL. At 280 to 298 the chain is on the lumenal, vesicle side; the sequence is SRARDWAWDKVKFYIDVKK. Residues 299-319 traverse the membrane as a helical segment; it reads FPISIGIIVFSYTSQIFLPSL. The Cytoplasmic segment spans residues 320-334; it reads EGNMQSPKEFHCMMN. Residues 335–355 form a helical membrane-spanning segment; sequence WTHIAACILKGLFALVAYLTW. Residues 356–376 lie on the Lumenal, vesicle side of the membrane; sequence ADETKEVITDNLPSTIRAVVN. Residues 377–397 form a helical membrane-spanning segment; the sequence is LFLVAKALLSYPLPFFAAVEV. The Cytoplasmic portion of the chain corresponds to 398-431; sequence LEKSLFQEGARAFFPNCYGGDGRLKSWGLTLRCA. A helical membrane pass occupies residues 432-452; it reads LVVFTLLMAIYVPHFALLMGL. Residues 453 to 454 lie on the Lumenal, vesicle side of the membrane; it reads TG. The chain crosses the membrane as a helical span at residues 455 to 475; it reads SLTGAGLCFLLPSLFHLKLLW. Residues 476–482 lie on the Cytoplasmic side of the membrane; that stretch reads RKLQWHQ. The helical transmembrane segment at 483–503 threads the bilayer; that stretch reads VFFDVSIFVIGSICSVSGFVH. At 504 to 518 the chain is on the lumenal, vesicle side; the sequence is SLEGLIEAFRFNIED.

It belongs to the amino acid/polyamine transporter 2 family.

Its subcellular location is the cytoplasmic vesicle membrane. It localises to the presynapse. The catalysed reaction is 4-aminobutanoate(out) + n H(+)(in) = 4-aminobutanoate(in) + n H(+)(out). It carries out the reaction glycine(out) + n H(+)(in) = glycine(in) + n H(+)(out). The enzyme catalyses beta-alanine(out) + n H(+)(in) = beta-alanine(in) + n H(+)(out). Antiporter that exchanges vesicular protons for cytosolic 4-aminobutanoate or to a lesser extend glycine, thus allowing their secretion from nerve terminals. The transport is equally dependent on the chemical and electrical components of the proton gradient. May also transport beta-alanine. Acidification of GABAergic synaptic vesicles is a prerequisite for 4-aminobutanoate uptake. The chain is Vesicular inhibitory amino acid transporter from Xenopus tropicalis (Western clawed frog).